The primary structure comprises 460 residues: uncharacterized protein (460 aa).

Residues 6–64 (PVKKNSTYNLYITGMGTKGEGIGKINNFTIFVTGAILGEEVEVNIIKVNKNYAVGKLLN) enclose the TRAM domain. [4Fe-4S] cluster contacts are provided by Cys77, Cys83, Cys86, and Cys163. Residues Gln287, Tyr316, Glu337, and Asp385 each contribute to the S-adenosyl-L-methionine site. The active-site Nucleophile is the Cys412.

The protein belongs to the class I-like SAM-binding methyltransferase superfamily. RNA M5U methyltransferase family.

This is an uncharacterized protein from Clostridium tetani (strain Massachusetts / E88).